The sequence spans 30 residues: Protamine-YII (30 aa).

Residues 1–30 are disordered; sequence PRRRTRRASRPVRRRRPRRVSRRRRARRRR.

In terms of tissue distribution, testis.

It is found in the nucleus. The protein resides in the chromosome. In terms of biological role, protamines substitute for histones in the chromatin of sperm during the haploid phase of spermatogenesis. They compact sperm DNA into a highly condensed, stable and inactive complex. The protein is Protamine-YII of Clupea harengus (Atlantic herring).